We begin with the raw amino-acid sequence, 449 residues long: Signal recognition particle protein (449 aa).

GTP is bound by residues 109–116, 191–195, and 249–252; these read GLQGSGKT, DTAGR, and SRID.

The protein belongs to the GTP-binding SRP family. SRP54 subfamily. In terms of assembly, part of the signal recognition particle protein translocation system, which is composed of SRP and FtsY. SRP is a ribonucleoprotein composed of Ffh and a 4.5S RNA molecule.

The protein localises to the cytoplasm. The enzyme catalyses GTP + H2O = GDP + phosphate + H(+). In terms of biological role, involved in targeting and insertion of nascent membrane proteins into the cytoplasmic membrane. Binds to the hydrophobic signal sequence of the ribosome-nascent chain (RNC) as it emerges from the ribosomes. The SRP-RNC complex is then targeted to the cytoplasmic membrane where it interacts with the SRP receptor FtsY. Interaction with FtsY leads to the transfer of the RNC complex to the Sec translocase for insertion into the membrane, the hydrolysis of GTP by both Ffh and FtsY, and the dissociation of the SRP-FtsY complex into the individual components. The sequence is that of Signal recognition particle protein from Rickettsia felis (strain ATCC VR-1525 / URRWXCal2) (Rickettsia azadi).